Here is an 875-residue protein sequence, read N- to C-terminus: Alanine--tRNA ligase (875 aa).

Positions 564, 568, 666, and 670 each coordinate Zn(2+).

This sequence belongs to the class-II aminoacyl-tRNA synthetase family. In terms of assembly, homotetramer. The cofactor is Zn(2+).

Its subcellular location is the cytoplasm. It carries out the reaction tRNA(Ala) + L-alanine + ATP = L-alanyl-tRNA(Ala) + AMP + diphosphate. Its function is as follows. Catalyzes the attachment of alanine to tRNA(Ala) in a two-step reaction: alanine is first activated by ATP to form Ala-AMP and then transferred to the acceptor end of tRNA(Ala). Also edits incorrectly charged Ser-tRNA(Ala) and Gly-tRNA(Ala) via its editing domain. The protein is Alanine--tRNA ligase of Yersinia enterocolitica serotype O:8 / biotype 1B (strain NCTC 13174 / 8081).